Consider the following 338-residue polypeptide: Probable family 20 transposase (338 aa).

It belongs to the transposase 20 family.

Required for the transposition of an insertion element. The chain is Probable family 20 transposase from Pseudomonas aeruginosa (strain ATCC 15692 / DSM 22644 / CIP 104116 / JCM 14847 / LMG 12228 / 1C / PRS 101 / PAO1).